The sequence spans 156 residues: MSRRNTAKKRFASPDPLYKSRLVSMLTVRILKSGKKTLAQRIIYQALDIVKERTETDPLNVLEKAIRNITPLVEVKARRVGGSTYQVPIEVRAYRGTNLALRWITRFSRERSGKSMSMKLANEIMDAANETGNSIRKREETHRMAEANKAFAHYRY.

The protein belongs to the universal ribosomal protein uS7 family. In terms of assembly, part of the 30S ribosomal subunit.

Its subcellular location is the plastid. The protein localises to the chloroplast. Its function is as follows. One of the primary rRNA binding proteins, it binds directly to 16S rRNA where it nucleates assembly of the head domain of the 30S subunit. This Porphyra purpurea (Red seaweed) protein is Small ribosomal subunit protein uS7c (rps7).